The chain runs to 421 residues: Subtilisin-like protease 2 (421 aa).

A signal peptide spans methionine 1–glycine 16. Residues aspartate 17–alanine 122 constitute a propeptide that is removed on maturation. An Inhibitor I9 domain is found at glutamine 36–alanine 122. A Peptidase S8 domain is found at arginine 131 to tyrosine 421. Residues aspartate 169 and histidine 201 each act as charge relay system in the active site. 3 N-linked (GlcNAc...) asparagine glycosylation sites follow: asparagine 248, asparagine 261, and asparagine 348. The active-site Charge relay system is serine 357. Asparagine 388 carries N-linked (GlcNAc...) asparagine glycosylation.

Belongs to the peptidase S8 family.

The protein localises to the secreted. Its function is as follows. Secreted subtilisin-like serine protease with keratinolytic activity that contributes to pathogenicity. This Trichophyton verrucosum (strain HKI 0517) protein is Subtilisin-like protease 2 (SUB2).